Reading from the N-terminus, the 249-residue chain is MFKATCNSRDFKKVINATSNLVDEICFEVDETGIKASAMDPSHVALVSMGMPKEVFESYEGDIHDIGIDLEALKKIIARSKGDEKLILELDDEKNKLNVTFKSNVTRKFSIALYDVSSSNLKVPDISYPNQVSIKAGAFVEALKDAELVNDHITLKVDEDKFVIYSKGDLNQSETVFENNNDEYETLTEFKMSEPSKSTFNLAYLKDLTKSTSAEDILKIYLGSDMPVKIEYEVSGSKLVFLLAPRIES.

It belongs to the PCNA family. As to quaternary structure, homotrimer. The subunits circularize to form a toroid; DNA passes through its center. Replication factor C (RFC) is required to load the toroid on the DNA.

Its function is as follows. Sliding clamp subunit that acts as a moving platform for DNA processing. Responsible for tethering the catalytic subunit of DNA polymerase and other proteins to DNA during high-speed replication. In Methanococcus vannielii (strain ATCC 35089 / DSM 1224 / JCM 13029 / OCM 148 / SB), this protein is DNA polymerase sliding clamp.